The sequence spans 590 residues: Polypeptide N-acetylgalactosaminyltransferase 8 (590 aa).

Over 1–11 (MCLDIWRHKKK) the chain is Cytoplasmic. Residues 12 to 31 (VLPLLLLMAIGSIIYYLYTL) traverse the membrane as a helical; Signal-anchor for type II membrane protein segment. Residues 32–590 (KLEGERDESA…QHFWDNVKTQ (559 aa)) are Lumenal-facing. Asn77 carries N-linked (GlcNAc...) asparagine glycosylation. Intrachain disulfides connect Cys117/Cys345, Cys336/Cys419, Cys459/Cys475, Cys502/Cys517, and Cys546/Cys561. Residues 127–236 (LPSVSVVITY…KGWLEPLIAP (110 aa)) form a catalytic subdomain A region. Asp168 provides a ligand contact to substrate. A Mn(2+)-binding site is contributed by Asp220. Ser221 is a substrate binding site. Residue His222 coordinates Mn(2+). Asn241 carries an N-linked (GlcNAc...) asparagine glycan. The catalytic subdomain B stretch occupies residues 291–353 (PHKNPIMNGG…PCSRVGHLFR (63 aa)). Position 322 (Trp322) interacts with substrate. His350 lines the Mn(2+) pocket. Residue Arg353 participates in substrate binding. Positions 446-573 (ASGVLQSISS…KNHKQQWKFG (128 aa)) constitute a Ricin B-type lectin domain.

It belongs to the glycosyltransferase 2 family. GalNAc-T subfamily. Requires Mn(2+) as cofactor. In terms of tissue distribution, expressed in developing oocytes and egg chambers. During embryonic stages 9-11, expressed in the primordium of the foregut, midgut and hindgut. During embryonic stages 12-13, expressed in the posterior midgut and hindgut. During embryonic stages 14-15, expression continues in the hindgut. No expression detected during embryonic stages 16-17 or in third instar larvae imaginal disks.

The protein resides in the golgi apparatus membrane. The catalysed reaction is L-seryl-[protein] + UDP-N-acetyl-alpha-D-galactosamine = a 3-O-[N-acetyl-alpha-D-galactosaminyl]-L-seryl-[protein] + UDP + H(+). It carries out the reaction L-threonyl-[protein] + UDP-N-acetyl-alpha-D-galactosamine = a 3-O-[N-acetyl-alpha-D-galactosaminyl]-L-threonyl-[protein] + UDP + H(+). It functions in the pathway protein modification; protein glycosylation. In terms of biological role, catalyzes the initial reaction in O-linked oligosaccharide biosynthesis, the transfer of an N-acetyl-D-galactosamine residue to a serine or threonine residue on the protein receptor. It can both act as a peptide transferase that transfers GalNAc onto unmodified peptide substrates, and as a glycopeptide transferase that requires the prior addition of a GalNAc on a peptide before adding additional GalNAc moieties. Prefers both EA2 and the diglycosylated Muc5AC-3/13 as substrates, albeit at very low levels fro Muc5AC-3/13. This chain is Polypeptide N-acetylgalactosaminyltransferase 8, found in Drosophila melanogaster (Fruit fly).